The following is a 190-amino-acid chain: Elongation factor P (190 aa).

An N6-(3,6-diaminohexanoyl)-5-hydroxylysine modification is found at Lys-34.

It belongs to the elongation factor P family. May be beta-lysylated on the epsilon-amino group of Lys-34 by the combined action of EpmA and EpmB, and then hydroxylated on the C5 position of the same residue by EpmC (if this protein is present). Lysylation is critical for the stimulatory effect of EF-P on peptide-bond formation. The lysylation moiety may extend toward the peptidyltransferase center and stabilize the terminal 3-CCA end of the tRNA. Hydroxylation of the C5 position on Lys-34 may allow additional potential stabilizing hydrogen-bond interactions with the P-tRNA.

Its subcellular location is the cytoplasm. It functions in the pathway protein biosynthesis; polypeptide chain elongation. Functionally, involved in peptide bond synthesis. Alleviates ribosome stalling that occurs when 3 or more consecutive Pro residues or the sequence PPG is present in a protein, possibly by augmenting the peptidyl transferase activity of the ribosome. Modification of Lys-34 is required for alleviation. The sequence is that of Elongation factor P from Psychrobacter cryohalolentis (strain ATCC BAA-1226 / DSM 17306 / VKM B-2378 / K5).